The following is an 88-amino-acid chain: Insertion element ISR1 uncharacterized 10 kDa protein A3 (88 aa).

It belongs to the transposase 8 family.

This chain is Insertion element ISR1 uncharacterized 10 kDa protein A3, found in Rhizobium sp.